The chain runs to 312 residues: Porphobilinogen deaminase (312 aa).

Position 241 is an S-(dipyrrolylmethanemethyl)cysteine (C241).

Belongs to the HMBS family. As to quaternary structure, monomer. Dipyrromethane serves as cofactor.

It carries out the reaction 4 porphobilinogen + H2O = hydroxymethylbilane + 4 NH4(+). It participates in porphyrin-containing compound metabolism; protoporphyrin-IX biosynthesis; coproporphyrinogen-III from 5-aminolevulinate: step 2/4. Its pathway is porphyrin-containing compound metabolism; chlorophyll biosynthesis. In terms of biological role, tetrapolymerization of the monopyrrole PBG into the hydroxymethylbilane pre-uroporphyrinogen in several discrete steps. This is Porphobilinogen deaminase (hemC) from Chlorobaculum parvum (strain DSM 263 / NCIMB 8327) (Chlorobium vibrioforme subsp. thiosulfatophilum).